The chain runs to 706 residues: DNA ligase (706 aa).

NAD(+) is bound by residues 40–44 (DLQYD), 89–90 (SI), and E120. The active-site N6-AMP-lysine intermediate is K122. R143, E190, K306, and K330 together coordinate NAD(+). Residues C424, C427, C442, and C447 each coordinate Zn(2+). The BRCT domain occupies 625 to 706 (EANLPLAGKN…FRLRYETEAT (82 aa)).

It belongs to the NAD-dependent DNA ligase family. LigA subfamily. The cofactor is Mg(2+). It depends on Mn(2+) as a cofactor.

It catalyses the reaction NAD(+) + (deoxyribonucleotide)n-3'-hydroxyl + 5'-phospho-(deoxyribonucleotide)m = (deoxyribonucleotide)n+m + AMP + beta-nicotinamide D-nucleotide.. In terms of biological role, DNA ligase that catalyzes the formation of phosphodiester linkages between 5'-phosphoryl and 3'-hydroxyl groups in double-stranded DNA using NAD as a coenzyme and as the energy source for the reaction. It is essential for DNA replication and repair of damaged DNA. The protein is DNA ligase of Rhodopirellula baltica (strain DSM 10527 / NCIMB 13988 / SH1).